Reading from the N-terminus, the 79-residue chain is Probable Fe(2+)-trafficking protein (79 aa).

This sequence belongs to the Fe(2+)-trafficking protein family. In terms of assembly, monomer.

Functionally, could be a mediator in iron transactions between iron acquisition and iron-requiring processes, such as synthesis and/or repair of Fe-S clusters in biosynthetic enzymes. The polypeptide is Probable Fe(2+)-trafficking protein (Blochmanniella floridana).